The chain runs to 204 residues: Putative glutathione S-transferase alpha-3 (204 aa).

At threonine 2 the chain carries N-acetylthreonine. The GST N-terminal domain occupies 2-79; that stretch reads TKPQLSYFKV…YIASQHDFVG (78 aa). Glutathione contacts are provided by residues tyrosine 8, 49 to 50, and 63 to 64; these read QL and QS. In terms of domain architecture, GST C-terminal spans 81 to 202; it reads TPEEKALVDE…YLKNRPITER (122 aa).

It belongs to the GST superfamily. Alpha family.

It catalyses the reaction RX + glutathione = an S-substituted glutathione + a halide anion + H(+). In terms of biological role, conjugation of reduced glutathione to a wide number of exogenous and endogenous hydrophobic electrophiles. This is Putative glutathione S-transferase alpha-3 (gsta3) from Dictyostelium discoideum (Social amoeba).